The following is a 461-amino-acid chain: MGKEDKTHINVVVIGHVDSGKSTTTGHLIYKCGGIDKRTIEKFEKEAAELGKGSFKYAWVLDKLKAERERGITIDIALWKFETPKYYVTVIDAPGHRDFIKNMITGTSQADCAILIIAAGTGEFEAGISKDGQTREHALLAYTLGVKQLIVAINKMDTTKWSEARFNEIIKETSNFIKKVGYNPKTVAFVPISGFNGDNMLEASTNCPWYKGWEKEVKGGKATGKTLLEAIDSIEPPKRPTDKPLRLPLQDVYKIGGIGTVPVGRIETGILKPGMVVTFAPSNVTTEVKSVEMHHEQLSEGVPGDNVGFNVKNVSVKEIRRGNVAGDSKNDPPLGAASFDAQVIVLNHPGQVGAGYAPVLDCHTAHIACKFAELLQKIDRRTGKAVEESPKFIKSGDAAIVKMIPSKPMCVEAFTEYPPLGRFAVRDMRQTVAVGVIKKVEKAAAGSGKVTKSAAKAGGKK.

Glycine 2 is modified (n,N,N-trimethylglycine). Lysine 3 carries the N6,N6-dimethyllysine; alternate modification. An N6-methyllysine; alternate modification is found at lysine 3. Positions 6 to 241 (KTHINVVVIG…DSIEPPKRPT (236 aa)) constitute a tr-type G domain. Positions 15–22 (GHVDSGKS) are G1. 15-22 (GHVDSGKS) serves as a coordination point for GTP. N6-methyllysine is present on lysine 31. Residues 71 to 75 (GITID) form a G2 region. Lysine 80 is subject to N6,N6,N6-trimethyllysine. A G3 region spans residues 92 to 95 (DAPG). GTP contacts are provided by residues 92 to 96 (DAPGH) and 154 to 157 (NKMD). Positions 154-157 (NKMD) are G4. A G5 region spans residues 193–195 (SGF). The residue at position 317 (lysine 317) is an N6,N6-dimethyllysine; alternate. Lysine 317 carries the N6-methyllysine; alternate modification. Position 391 is an N6-methyllysine (lysine 391).

The protein belongs to the TRAFAC class translation factor GTPase superfamily. Classic translation factor GTPase family. EF-Tu/EF-1A subfamily.

The protein localises to the cytoplasm. This protein promotes the GTP-dependent binding of aminoacyl-tRNA to the A-site of ribosomes during protein biosynthesis. The protein is Elongation factor 1-alpha (TEF) of Pseudoechria curvicolla (Podospora curvicolla).